We begin with the raw amino-acid sequence, 277 residues long: Ribonuclease HII (277 aa).

The region spanning 72–260 (EYIAGIDEAG…IKEMIEMKKE (189 aa)) is the RNase H type-2 domain. Residues Asp-78, Glu-79, and Asp-170 each contribute to the a divalent metal cation site.

Belongs to the RNase HII family. Mn(2+) is required as a cofactor. Mg(2+) serves as cofactor.

The protein resides in the cytoplasm. The catalysed reaction is Endonucleolytic cleavage to 5'-phosphomonoester.. In terms of biological role, endonuclease that specifically degrades the RNA of RNA-DNA hybrids. The chain is Ribonuclease HII from Geobacillus sp. (strain WCH70).